Consider the following 436-residue polypeptide: 3-ketoacyl-CoA thiolase (436 aa).

The Acyl-thioester intermediate role is filled by Cys-99. Residues His-392 and Cys-422 each act as proton acceptor in the active site.

It belongs to the thiolase-like superfamily. Thiolase family. Heterotetramer of two alpha chains (FadJ) and two beta chains (FadI).

Its subcellular location is the cytoplasm. It catalyses the reaction an acyl-CoA + acetyl-CoA = a 3-oxoacyl-CoA + CoA. Its pathway is lipid metabolism; fatty acid beta-oxidation. Catalyzes the final step of fatty acid oxidation in which acetyl-CoA is released and the CoA ester of a fatty acid two carbons shorter is formed. The sequence is that of 3-ketoacyl-CoA thiolase from Photorhabdus laumondii subsp. laumondii (strain DSM 15139 / CIP 105565 / TT01) (Photorhabdus luminescens subsp. laumondii).